The primary structure comprises 453 residues: Gamma-aminobutyric acid receptor subunit alpha-6 (453 aa).

An N-terminal signal peptide occupies residues M1–A19. The Extracellular segment spans residues Q20–F243. N31 carries an N-linked (GlcNAc...) asparagine glycan. 4-aminobutanoate is bound at residue R84. N128 and N141 each carry an N-linked (GlcNAc...) asparagine glycan. T147 lines the 4-aminobutanoate pocket. An intrachain disulfide couples C156 to C170. The helical transmembrane segment at M244–I264 threads the bilayer. Residues N265 to P270 are Cytoplasmic-facing. A helical membrane pass occupies residues A271–A290. The Extracellular portion of the chain corresponds to R291–D304. Residues W305 to N325 form a helical membrane-spanning segment. Over Y326 to R422 the chain is Cytoplasmic. A Phosphoserine modification is found at S375. Residues I423 to K443 traverse the membrane as a helical segment. Over D444–E453 the chain is Extracellular.

The protein belongs to the ligand-gated ion channel (TC 1.A.9) family. Gamma-aminobutyric acid receptor (TC 1.A.9.5) subfamily. GABRA6 sub-subfamily. In terms of assembly, heteropentamer, formed by a combination of alpha (GABRA1-6), beta (GABRB1-3), gamma (GABRG1-3), delta (GABRD), epsilon (GABRE), rho (GABRR1-3), pi (GABRP) and theta (GABRQ) chains, each subunit exhibiting distinct physiological and pharmacological properties. Binds UBQLN1. In terms of tissue distribution, expressed in brain, in cerebellar granule cells.

Its subcellular location is the postsynaptic cell membrane. The protein resides in the cell membrane. It catalyses the reaction chloride(in) = chloride(out). Its function is as follows. Alpha subunit of the heteropentameric ligand-gated chloride channel gated by gamma-aminobutyric acid (GABA), a major inhibitory neurotransmitter in the brain. GABA-gated chloride channels, also named GABA(A) receptors (GABAAR), consist of five subunits arranged around a central pore and contain GABA active binding site(s) located at the alpha and beta subunit interface(s). When activated by GABA, GABAARs selectively allow the flow of chloride anions across the cell membrane down their electrochemical gradient. Alpha-6/GABRA6 subunits are found at both synaptic and extrasynaptic sites. Chloride influx into the postsynaptic neuron following GABAAR opening decreases the neuron ability to generate a new action potential, thereby reducing nerve transmission. Extrasynaptic alpha-6-containing receptors contribute to the tonic GABAergic inhibition. Alpha-6 subunits are also present on glutamatergic synapses. The protein is Gamma-aminobutyric acid receptor subunit alpha-6 of Mus musculus (Mouse).